The chain runs to 228 residues: Aquaporin Z 1 (228 aa).

2 helical membrane passes run 9-29 (FLGT…AAAF) and 34-54 (IGLL…AYAV). The NPA 1 motif lies at 63-65 (NPA). 3 helical membrane passes run 82–102 (VGYI…LYVI), 129–149 (LTAA…IILG), and 156–176 (PVGF…LVSI). The NPA 2 motif lies at 184–186 (NPA). Residues 204–224 (WLFWVAPLIGAVIAGIVWKIV) form a helical membrane-spanning segment.

It belongs to the MIP/aquaporin (TC 1.A.8) family. In terms of assembly, homotetramer.

Its subcellular location is the cell inner membrane. The catalysed reaction is H2O(in) = H2O(out). Its function is as follows. Channel that permits osmotically driven movement of water in both directions. It is involved in the osmoregulation and in the maintenance of cell turgor during volume expansion in rapidly growing cells. It mediates rapid entry or exit of water in response to abrupt changes in osmolarity. In Rhizobium meliloti (strain 1021) (Ensifer meliloti), this protein is Aquaporin Z 1.